The following is a 330-amino-acid chain: GTPase Obg (330 aa).

One can recognise an Obg domain in the interval 1 to 159 (MHFIDEVKIY…MWIHLSLKLL (159 aa)). The 168-residue stretch at 160–327 (SDVGLVGFPN…IVKLALETIK (168 aa)) folds into the OBG-type G domain. GTP-binding positions include 166–173 (GFPNAGKS), 191–195 (FTTLV), 212–215 (DIPG), 279–282 (NKCD), and 308–310 (STY). S173 and T193 together coordinate Mg(2+).

It belongs to the TRAFAC class OBG-HflX-like GTPase superfamily. OBG GTPase family. In terms of assembly, monomer. Mg(2+) serves as cofactor.

It is found in the cytoplasm. Functionally, an essential GTPase which binds GTP, GDP and possibly (p)ppGpp with moderate affinity, with high nucleotide exchange rates and a fairly low GTP hydrolysis rate. Plays a role in control of the cell cycle, stress response, ribosome biogenesis and in those bacteria that undergo differentiation, in morphogenesis control. This Rickettsia massiliae (strain Mtu5) protein is GTPase Obg.